The following is a 301-amino-acid chain: Fluoroquinolones export ATP-binding protein Rv2688c (301 aa).

In terms of domain architecture, ABC transporter spans 18 to 246 (IRVRGLTFRY…RSRRRVRVEY (229 aa)). ATP is bound at residue 52-59 (GPSGAGKS).

Belongs to the ABC transporter superfamily. In terms of assembly, the complex is composed of 2 ATP-binding proteins (Rv2688c) and 2 transmembrane proteins (Rv2686c and Rv2687c).

Its subcellular location is the cell membrane. Inhibited by reserpine and verapamil. In terms of biological role, part of the ABC transporter complex Rv2686c/Rv2687c/Rv2688c involved in fluoroquinolones export. Confers resistance to ciprofloxacin and, to a lesser extent, norfloxacin, moxifloxacin and sparfloxacin. Probably responsible for energy coupling to the transport system. The sequence is that of Fluoroquinolones export ATP-binding protein Rv2688c from Mycobacterium tuberculosis (strain ATCC 25618 / H37Rv).